A 102-amino-acid chain; its full sequence is Small ribosomal subunit protein uS10 (102 aa).

This sequence belongs to the universal ribosomal protein uS10 family. As to quaternary structure, part of the 30S ribosomal subunit.

Involved in the binding of tRNA to the ribosomes. The polypeptide is Small ribosomal subunit protein uS10 (Methylocella silvestris (strain DSM 15510 / CIP 108128 / LMG 27833 / NCIMB 13906 / BL2)).